The chain runs to 141 residues: Large ribosomal subunit protein uL11 (141 aa).

This sequence belongs to the universal ribosomal protein uL11 family. As to quaternary structure, part of the ribosomal stalk of the 50S ribosomal subunit. Interacts with L10 and the large rRNA to form the base of the stalk. L10 forms an elongated spine to which L12 dimers bind in a sequential fashion forming a multimeric L10(L12)X complex. In terms of processing, one or more lysine residues are methylated.

Forms part of the ribosomal stalk which helps the ribosome interact with GTP-bound translation factors. The protein is Large ribosomal subunit protein uL11 of Ligilactobacillus salivarius (strain UCC118) (Lactobacillus salivarius).